Consider the following 492-residue polypeptide: Homoserine O-acetyltransferase (492 aa).

The AB hydrolase-1 domain maps to 47–354 (NVILVCHALT…NYGHDAFLLE (308 aa)). The active-site Nucleophile is Ser-152. Arg-221 is a substrate binding site. Residues Asp-315 and His-348 contribute to the active site. Asp-349 is a binding site for substrate. CBS domains are found at residues 375 to 432 (MKLD…FTTL) and 436 to 492 (LTKN…HRCT).

Belongs to the AB hydrolase superfamily. MetX family. As to quaternary structure, homodimer.

Its subcellular location is the cytoplasm. It carries out the reaction L-homoserine + acetyl-CoA = O-acetyl-L-homoserine + CoA. It functions in the pathway amino-acid biosynthesis; L-methionine biosynthesis via de novo pathway; O-acetyl-L-homoserine from L-homoserine: step 1/1. Functionally, transfers an acetyl group from acetyl-CoA to L-homoserine, forming acetyl-L-homoserine. This is Homoserine O-acetyltransferase from Methanosalsum zhilinae (strain DSM 4017 / NBRC 107636 / OCM 62 / WeN5) (Methanohalophilus zhilinae).